Reading from the N-terminus, the 141-residue chain is ATP synthase epsilon chain (141 aa).

It belongs to the ATPase epsilon chain family. F-type ATPases have 2 components, CF(1) - the catalytic core - and CF(0) - the membrane proton channel. CF(1) has five subunits: alpha(3), beta(3), gamma(1), delta(1), epsilon(1). CF(0) has three main subunits: a, b and c.

Its subcellular location is the cell inner membrane. Its function is as follows. Produces ATP from ADP in the presence of a proton gradient across the membrane. This is ATP synthase epsilon chain (atpC) from Acidithiobacillus ferridurans.